A 514-amino-acid polypeptide reads, in one-letter code: Protein translocase subunit SecD (514 aa).

5 consecutive transmembrane segments (helical) span residues 7 to 27 (WKIF…LPNF), 357 to 377 (IIGF…LGLF), 389 to 409 (VLAL…AGII), 448 to 470 (FATI…IFGV), and 482 to 502 (IGII…IDIW).

Belongs to the SecD/SecF family. SecD subfamily. As to quaternary structure, forms a complex with SecF. Part of the essential Sec protein translocation apparatus which comprises SecA, SecYEG and auxiliary proteins SecDF-YajC and YidC.

The protein localises to the cell inner membrane. Part of the Sec protein translocase complex. Interacts with the SecYEG preprotein conducting channel. SecDF uses the proton motive force (PMF) to complete protein translocation after the ATP-dependent function of SecA. This is Protein translocase subunit SecD from Rickettsia bellii (strain RML369-C).